The primary structure comprises 111 residues: Iron-sulfur cluster assembly protein CyaY (111 aa).

This sequence belongs to the frataxin family.

In terms of biological role, involved in iron-sulfur (Fe-S) cluster assembly. May act as a regulator of Fe-S biogenesis. This Cupriavidus taiwanensis (strain DSM 17343 / BCRC 17206 / CCUG 44338 / CIP 107171 / LMG 19424 / R1) (Ralstonia taiwanensis (strain LMG 19424)) protein is Iron-sulfur cluster assembly protein CyaY.